The chain runs to 362 residues: Biotin synthase (362 aa).

The Radical SAM core domain occupies Asn-39–Arg-267. [4Fe-4S] cluster contacts are provided by Cys-54, Cys-58, and Cys-61. Residues Cys-98, Cys-130, Cys-190, and Arg-262 each contribute to the [2Fe-2S] cluster site. Residues Pro-317 to Asn-362 form a disordered region. The segment covering Glu-328–Leu-354 has biased composition (basic and acidic residues).

It belongs to the radical SAM superfamily. Biotin synthase family. As to quaternary structure, homodimer. [4Fe-4S] cluster is required as a cofactor. [2Fe-2S] cluster serves as cofactor.

It catalyses the reaction (4R,5S)-dethiobiotin + (sulfur carrier)-SH + 2 reduced [2Fe-2S]-[ferredoxin] + 2 S-adenosyl-L-methionine = (sulfur carrier)-H + biotin + 2 5'-deoxyadenosine + 2 L-methionine + 2 oxidized [2Fe-2S]-[ferredoxin]. Its pathway is cofactor biosynthesis; biotin biosynthesis; biotin from 7,8-diaminononanoate: step 2/2. In terms of biological role, catalyzes the conversion of dethiobiotin (DTB) to biotin by the insertion of a sulfur atom into dethiobiotin via a radical-based mechanism. This is Biotin synthase from Flavobacterium psychrophilum (strain ATCC 49511 / DSM 21280 / CIP 103535 / JIP02/86).